The following is a 317-amino-acid chain: MATHDNTEHVSDATDEAVGWESKLRYFLNSDFVRSAPYWGIPFVLMSIAVYGGTGYNFAISFTDYEGLGTPDYSTLDLEMYAQALSSDAFIAAAQNNLVLLVGFTTICLVLGLFLAILLDHGIRFSEKFQTVYLLPMSLSFVVTAQLWLWMFNVESGILNLVVTTLGFNPVDWLGNPSIALGAVILALIWQFSGYTMVVYLAGLQSIPDDQFEAARVDGASITRTYLRIIVPQLKEASVSAAVVLMVFALKAFTFLYALVGRYRPPNGTDILATLMVRRAFKFGEWAYSAAIATMLLIMALGVIGPYLYYQYKQGGL.

6 helical membrane passes run 40–60 (GIPF…NFAI), 98–118 (LVLL…LAIL), 132–152 (VYLL…LWMF), 179–199 (IALG…TMVV), 241–261 (AAVV…ALVG), and 290–310 (AAIA…YLYY). The ABC transmembrane type-1 domain occupies 94 to 309 (AQNNLVLLVG…ALGVIGPYLY (216 aa)).

The protein belongs to the binding-protein-dependent transport system permease family. The complex is composed of two ATP-binding proteins (XacJ and XacK), two transmembrane proteins (XacH and XacI) and a solute-binding protein (XacG).

The protein localises to the cell membrane. Part of the ABC transporter complex XacGHIJK involved in the uptake of xylose and arabinose. Responsible for the translocation of the substrate across the membrane. The protein is Xylose/arabinose import permease protein XacH of Haloferax volcanii (strain ATCC 29605 / DSM 3757 / JCM 8879 / NBRC 14742 / NCIMB 2012 / VKM B-1768 / DS2) (Halobacterium volcanii).